A 938-amino-acid polypeptide reads, in one-letter code: Isoleucine--tRNA ligase (938 aa).

The 'HIGH' region motif lies at 58–68 (PYANGSIHIGH). K183 bears the N6-acetyllysine mark. E561 is an L-isoleucyl-5'-AMP binding site. The short motif at 602-606 (KMSKS) is the 'KMSKS' region element. Residue K605 participates in ATP binding. Positions 901, 904, 921, and 924 each coordinate Zn(2+).

The protein belongs to the class-I aminoacyl-tRNA synthetase family. IleS type 1 subfamily. Monomer. Requires Zn(2+) as cofactor.

Its subcellular location is the cytoplasm. It carries out the reaction tRNA(Ile) + L-isoleucine + ATP = L-isoleucyl-tRNA(Ile) + AMP + diphosphate. Functionally, catalyzes the attachment of isoleucine to tRNA(Ile). As IleRS can inadvertently accommodate and process structurally similar amino acids such as valine, to avoid such errors it has two additional distinct tRNA(Ile)-dependent editing activities. One activity is designated as 'pretransfer' editing and involves the hydrolysis of activated Val-AMP. The other activity is designated 'posttransfer' editing and involves deacylation of mischarged Val-tRNA(Ile). In Escherichia coli O6:K15:H31 (strain 536 / UPEC), this protein is Isoleucine--tRNA ligase.